The sequence spans 217 residues: UPF0502 protein Smlt0097 (217 aa).

Belongs to the UPF0502 family.

This chain is UPF0502 protein Smlt0097, found in Stenotrophomonas maltophilia (strain K279a).